The sequence spans 204 residues: FMN-dependent NADH:quinone oxidoreductase (204 aa).

Residues S9, S15–S17, and M97–F100 each bind FMN.

Belongs to the azoreductase type 1 family. Homodimer. Requires FMN as cofactor.

The catalysed reaction is 2 a quinone + NADH + H(+) = 2 a 1,4-benzosemiquinone + NAD(+). It catalyses the reaction N,N-dimethyl-1,4-phenylenediamine + anthranilate + 2 NAD(+) = 2-(4-dimethylaminophenyl)diazenylbenzoate + 2 NADH + 2 H(+). In terms of biological role, quinone reductase that provides resistance to thiol-specific stress caused by electrophilic quinones. Its function is as follows. Also exhibits azoreductase activity. Catalyzes the reductive cleavage of the azo bond in aromatic azo compounds to the corresponding amines. The protein is FMN-dependent NADH:quinone oxidoreductase of Methylobacterium radiotolerans (strain ATCC 27329 / DSM 1819 / JCM 2831 / NBRC 15690 / NCIMB 10815 / 0-1).